We begin with the raw amino-acid sequence, 95 residues long: Putative membrane protein insertion efficiency factor (95 aa).

Belongs to the UPF0161 family.

The protein resides in the cell membrane. Functionally, could be involved in insertion of integral membrane proteins into the membrane. This chain is Putative membrane protein insertion efficiency factor, found in Lactobacillus delbrueckii subsp. bulgaricus (strain ATCC 11842 / DSM 20081 / BCRC 10696 / JCM 1002 / NBRC 13953 / NCIMB 11778 / NCTC 12712 / WDCM 00102 / Lb 14).